We begin with the raw amino-acid sequence, 95 residues long: UPF0358 protein GTNG_0942 (95 aa).

This sequence belongs to the UPF0358 family.

The polypeptide is UPF0358 protein GTNG_0942 (Geobacillus thermodenitrificans (strain NG80-2)).